The chain runs to 209 residues: Large ribosomal subunit protein uL4 (209 aa).

Residues 45–78 (RQGTHKAKERAEVAGSTRKIKKQKGTGTARAGSA) are disordered.

This sequence belongs to the universal ribosomal protein uL4 family. Part of the 50S ribosomal subunit.

One of the primary rRNA binding proteins, this protein initially binds near the 5'-end of the 23S rRNA. It is important during the early stages of 50S assembly. It makes multiple contacts with different domains of the 23S rRNA in the assembled 50S subunit and ribosome. Functionally, forms part of the polypeptide exit tunnel. The protein is Large ribosomal subunit protein uL4 of Flavobacterium psychrophilum (strain ATCC 49511 / DSM 21280 / CIP 103535 / JIP02/86).